Here is a 191-residue protein sequence, read N- to C-terminus: Inosine triphosphate pyrophosphatase (191 aa).

Thr15 to Lys20 is a binding site for ITP. Residue Glu43 coordinates Mg(2+). ITP-binding positions include Lys55, Asp71–Thr72, Lys88, Phe147–Asp150, Lys168, and His173–Arg174.

This sequence belongs to the HAM1 NTPase family. Homodimer. Mg(2+) is required as a cofactor. The cofactor is Mn(2+).

Its subcellular location is the cytoplasm. The protein resides in the nucleus. It carries out the reaction ITP + H2O = IMP + diphosphate + H(+). The enzyme catalyses dITP + H2O = dIMP + diphosphate + H(+). The catalysed reaction is XTP + H2O = XMP + diphosphate + H(+). Its function is as follows. Pyrophosphatase that hydrolyzes non-canonical purine nucleotides such as inosine triphosphate (ITP), deoxyinosine triphosphate (dITP) or xanthosine 5'-triphosphate (XTP) to their respective monophosphate derivatives. The enzyme does not distinguish between the deoxy- and ribose forms. Probably excludes non-canonical purines from RNA and DNA precursor pools, thus preventing their incorporation into RNA and DNA and avoiding chromosomal lesions. The polypeptide is Inosine triphosphate pyrophosphatase (Neurospora crassa (strain ATCC 24698 / 74-OR23-1A / CBS 708.71 / DSM 1257 / FGSC 987)).